Here is a 97-residue protein sequence, read N- to C-terminus: Defensin-like protein 246 (97 aa).

An N-terminal signal peptide occupies residues Met-1–Gly-24. 4 disulfide bridges follow: Cys-39/Cys-96, Cys-50/Cys-79, Cys-58/Cys-89, and Cys-77/Cys-91.

The protein belongs to the DEFL family. Flower buds and stems.

The protein resides in the secreted. The chain is Defensin-like protein 246 (SCRL5) from Arabidopsis thaliana (Mouse-ear cress).